The following is a 328-amino-acid chain: LOB domain-containing protein 27 (328 aa).

Residues 35–136 (GACAACKYQR…EELKAVNSQL (102 aa)) form the LOB domain.

The protein belongs to the LOB domain-containing protein family.

This Arabidopsis thaliana (Mouse-ear cress) protein is LOB domain-containing protein 27 (LBD27).